The following is a 356-amino-acid chain: Protein pelota homolog (356 aa).

The protein belongs to the eukaryotic release factor 1 family. Pelota subfamily. Monomer. A divalent metal cation is required as a cofactor.

It localises to the cytoplasm. Its function is as follows. May function in recognizing stalled ribosomes, interact with stem-loop structures in stalled mRNA molecules, and effect endonucleolytic cleavage of the mRNA. May play a role in the release non-functional ribosomes and degradation of damaged mRNAs. Has endoribonuclease activity. The chain is Protein pelota homolog from Staphylothermus marinus (strain ATCC 43588 / DSM 3639 / JCM 9404 / F1).